The following is a 615-amino-acid chain: Nuclear receptor subfamily 1 group D member 1 (615 aa).

The span at 1–12 (MTTLDSNNNTGG) shows a compositional bias: polar residues. Positions 1-70 (MTTLDSNNNT…TQDPARSFGT (70 aa)) are required for phosphorylation by CSNK1E and cytoplasmic localization. The segment at 1–120 (MTTLDSNNNT…SSRVSPSKGT (120 aa)) is disordered. The tract at residues 1–129 (MTTLDSNNNT…TSNITKLNGM (129 aa)) is modulating. The span at 14–34 (ITYIGSSGSSPSRTSPESLYS) shows a compositional bias: low complexity. Positions 35–48 (DSSNGSFQSLTQGC) are enriched in polar residues. Positions 49–285 (PTYFPPSPTG…PPRSPSPEPT (237 aa)) are crucial for activation of GJA1. Residues Ser-55 and Ser-59 each carry the phosphoserine; by GSK3-beta modification. Low complexity predominate over residues 72-103 (PPSLSDDSSPSSASSSSSSSSSSFYNGSPPGS). The nuclear receptor DNA-binding region spans 130-206 (VLLCKVCGDV…VGMSRDAVRF (77 aa)). 2 NR C4-type zinc fingers span residues 133–153 (CKVC…CEGC) and 170–194 (CLKN…FKKC). Lys-192 and Lys-193 each carry N6-acetyllysine; by KAT5. Disordered stretches follow at residues 235–287 (LCPL…PTVE), 312–337 (PGNF…SQGC), and 357–385 (NGLR…PNSN). The span at 253-262 (PSPPPAPAPT) shows a compositional bias: pro residues. Thr-275 is modified (phosphothreonine; by CDK1). One can recognise an NR LBD domain in the interval 285–615 (TVEDVISQVA…KLLSFRVDAQ (331 aa)). Position 401 is an N6-acetyllysine (Lys-401). A heme-binding site is contributed by Cys-419. At Lys-592 the chain carries N6-acetyllysine. His-603 contributes to the heme binding site.

It belongs to the nuclear hormone receptor family. NR1 subfamily. As to quaternary structure, binds DNA as a monomer or a homodimer. Interacts with C1D, NR2E3, SP1 and ZNHIT1. Interacts with OPHN1 (via C-terminus). Interacts with PER2; the interaction associates PER2 to BMAL1 promoter region. Interacts with CRY1. Interacts with CCAR2. Interacts with SIAH2. Interacts with FBXW7 and CDK1. Interacts with HUWE1. Interacts with NR0B2. Interacts with NFIL3. Interacts (via domain NR LBD) with HSP90AA1 and HSP90AB1. Post-translationally, ubiquitinated, leading to its proteasomal degradation. Ubiquitinated by the SCF(FBXW7) complex when phosphorylated by CDK1 leading to its proteasomal degradation. Ubiquitinated by SIAH2; leading to its proteasomal degradation. Rapidly ubiquitinated in response to inflammatory triggers and sumoylation is a prerequisite to its ubiquitination. Sumoylated by UBE2I, desumoylated by SENP1, and sumoylation is a prerequisite to its ubiquitination. In terms of processing, phosphorylated by CSNK1E; phosphorylation enhances its cytoplasmic localization. Post-translationally, undergoes lysosome-mediated degradation in a time-dependent manner in the liver.

It localises to the nucleus. Its subcellular location is the cytoplasm. The protein resides in the cell projection. The protein localises to the dendrite. It is found in the dendritic spine. Its function is as follows. Transcriptional repressor which coordinates circadian rhythm and metabolic pathways in a heme-dependent manner. Integral component of the complex transcription machinery that governs circadian rhythmicity and forms a critical negative limb of the circadian clock by directly repressing the expression of core clock components BMAL1, CLOCK and CRY1. Also regulates genes involved in metabolic functions, including lipid and bile acid metabolism, adipogenesis, gluconeogenesis and the macrophage inflammatory response. Acts as a receptor for heme which stimulates its interaction with the NCOR1/HDAC3 corepressor complex, enhancing transcriptional repression. Recognizes two classes of DNA response elements within the promoter of its target genes and can bind to DNA as either monomers or homodimers, depending on the nature of the response element. Binds as a monomer to a response element composed of the consensus half-site motif 5'-[A/G]GGTCA-3' preceded by an A/T-rich 5' sequence (RevRE), or as a homodimer to a direct repeat of the core motif spaced by two nucleotides (RevDR-2). Acts as a potent competitive repressor of ROR alpha (RORA) function and regulates the levels of its ligand heme by repressing the expression of PPARGC1A, a potent inducer of heme synthesis. Regulates lipid metabolism by repressing the expression of APOC3 and by influencing the activity of sterol response element binding proteins (SREBPs); represses INSIG2 which interferes with the proteolytic activation of SREBPs which in turn govern the rhythmic expression of enzymes with key functions in sterol and fatty acid synthesis. Regulates gluconeogenesis via repression of G6PC1 and PEPCK and adipocyte differentiation via repression of PPARG. Regulates glucagon release in pancreatic alpha-cells via the AMPK-NAMPT-SIRT1 pathway and the proliferation, glucose-induced insulin secretion and expression of key lipogenic genes in pancreatic-beta cells. Positively regulates bile acid synthesis by increasing hepatic expression of CYP7A1 via repression of NR0B2 and NFIL3 which are negative regulators of CYP7A1. Modulates skeletal muscle oxidative capacity by regulating mitochondrial biogenesis and autophagy; controls mitochondrial biogenesis and respiration by interfering with the STK11-PRKAA1/2-SIRT1-PPARGC1A signaling pathway. Represses the expression of SERPINE1/PAI1, an important modulator of cardiovascular disease and the expression of inflammatory cytokines and chemokines in macrophages. Represses gene expression at a distance in macrophages by inhibiting the transcription of enhancer-derived RNAs (eRNAs). Plays a role in the circadian regulation of body temperature and negatively regulates thermogenic transcriptional programs in brown adipose tissue (BAT); imposes a circadian oscillation in BAT activity, increasing body temperature when awake and depressing thermogenesis during sleep. In concert with NR2E3, regulates transcriptional networks critical for photoreceptor development and function. In addition to its activity as a repressor, can also act as a transcriptional activator. In the ovarian granulosa cells acts as a transcriptional activator of STAR which plays a role in steroid biosynthesis. In collaboration with SP1, activates GJA1 transcription in a heme-independent manner. Represses the transcription of CYP2B10, CYP4A10 and CYP4A14. Represses the transcription of CES2. Represses and regulates the circadian expression of TSHB in a NCOR1-dependent manner. Negatively regulates the protein stability of NR3C1 and influences the time-dependent subcellular distribution of NR3C1, thereby affecting its transcriptional regulatory activity. Plays a critical role in the circadian control of neutrophilic inflammation in the lung; under resting, non-stress conditions, acts as a rhythmic repressor to limit inflammatory activity whereas in the presence of inflammatory triggers undergoes ubiquitin-mediated degradation thereby relieving inhibition of the inflammatory response. Plays a key role in the circadian regulation of microglial activation and neuroinflammation; suppresses microglial activation through the NF-kappaB pathway in the central nervous system. Plays a role in the regulation of the diurnal rhythms of lipid and protein metabolism in the skeletal muscle via transcriptional repression of genes controlling lipid and amino acid metabolism in the muscle. This chain is Nuclear receptor subfamily 1 group D member 1 (Nr1d1), found in Rattus norvegicus (Rat).